A 993-amino-acid chain; its full sequence is Muscular LMNA-interacting protein (993 aa).

The segment at 1 to 51 (MLSEQGLLSDCGNNYFQMTSCILSGSIQTTPQVSAGGSEAKPLIFTFVPTV) is interaction with LMNA. A disordered region spans residues 71 to 90 (PEESSDKSPETVNRSKSNDY). Over residues 80–90 (ETVNRSKSNDY) the composition is skewed to polar residues. Residue Ser-146 is modified to Phosphoserine. Disordered stretches follow at residues 152–171 (AASR…AAVR), 186–225 (VRPK…TSEQ), 231–250 (PAFS…PVNL), 300–322 (PHST…KPGL), 334–358 (SHVL…SLKS), 443–481 (SPAS…QGEL), 500–582 (TPLS…IHTY), 677–711 (SALH…TPSL), and 811–864 (LSMH…SQLT). Residues 161 to 837 (PPGGIGTAAV…GSDTVKTPTT (677 aa)) form a required for interaction with ISL1 region. The span at 212–225 (KHGQLTSSPTTSEQ) shows a compositional bias: polar residues. Residues 300–315 (PHSTQLSGSNLPSSTA) are compositionally biased toward polar residues. The span at 343–358 (PRTSSSPPSSSASLKS) shows a compositional bias: low complexity. The span at 500-532 (TPLSQAPSLSPTKQASSSLASMNVERTPSPTLK) shows a compositional bias: polar residues. The segment covering 533-563 (SNTMLSLLQTSTSSSVGLPPVPPSSSLSSLK) has biased composition (low complexity). The span at 564–574 (SKQDGDLRGPE) shows a compositional bias: basic and acidic residues. The segment covering 695-711 (SESTTPNHRSPVSTPSL) has biased composition (polar residues). Positions 811 to 822 (LSMHSSDSPSRS) are enriched in low complexity. Ser-818 is modified (phosphoserine). Residues 849–864 (ANLSSPSSTVSESQLT) show a composition bias toward polar residues.

Directly interacts with LMNA. Interacts with ISL1 (via N-terminal domain); the interaction represses ISL1 transactivator activity. Interactions of ISL1 with MLIP1 and GCN5/KAT2A may be mutually exclusive. In terms of tissue distribution, predominantly expressed in the heart and skeletal muscle. Also detected in liver. Expressed in skeletal muscle.

It is found in the nucleus. The protein resides in the nucleus envelope. The protein localises to the PML body. Its subcellular location is the cytoplasm. It localises to the cytosol. It is found in the cell membrane. The protein resides in the sarcolemma. Required for myoblast differentiation into myotubes, possibly acting as a transcriptional regulator of the myogenic program. Required for cardiac adaptation to stress through integrated regulation of the AKT/mTOR pathways and FOXO1. Regulates cardiac homeostasis and plays a role in the protection against cardiac hypertrophy. Binds chromatin. May act as a transcriptional cofactor for ISL1, repressing its transcriptional activity. May also repress MYOCD transcriptional activity. This chain is Muscular LMNA-interacting protein, found in Homo sapiens (Human).